Consider the following 593-residue polypeptide: Arginine--tRNA ligase (593 aa).

The short motif at 138 to 148 is the 'HIGH' region element; it reads ANPTGPLHVGH.

Belongs to the class-I aminoacyl-tRNA synthetase family. Monomer.

The protein resides in the cytoplasm. It catalyses the reaction tRNA(Arg) + L-arginine + ATP = L-arginyl-tRNA(Arg) + AMP + diphosphate. The sequence is that of Arginine--tRNA ligase from Burkholderia vietnamiensis (strain G4 / LMG 22486) (Burkholderia cepacia (strain R1808)).